Reading from the N-terminus, the 220-residue chain is Deoxyribose-phosphate aldolase (220 aa).

Asp89 functions as the Proton donor/acceptor in the catalytic mechanism. The Schiff-base intermediate with acetaldehyde role is filled by Lys150. The Proton donor/acceptor role is filled by Lys182.

Belongs to the DeoC/FbaB aldolase family. DeoC type 1 subfamily.

The protein resides in the cytoplasm. It carries out the reaction 2-deoxy-D-ribose 5-phosphate = D-glyceraldehyde 3-phosphate + acetaldehyde. It functions in the pathway carbohydrate degradation; 2-deoxy-D-ribose 1-phosphate degradation; D-glyceraldehyde 3-phosphate and acetaldehyde from 2-deoxy-alpha-D-ribose 1-phosphate: step 2/2. Its function is as follows. Catalyzes a reversible aldol reaction between acetaldehyde and D-glyceraldehyde 3-phosphate to generate 2-deoxy-D-ribose 5-phosphate. This is Deoxyribose-phosphate aldolase from Mycoplasmoides pirum (Mycoplasma pirum).